A 258-amino-acid polypeptide reads, in one-letter code: Regulatory protein RecX (258 aa).

It belongs to the RecX family.

Its subcellular location is the cytoplasm. Modulates RecA activity. The chain is Regulatory protein RecX from Streptococcus sanguinis (strain SK36).